A 336-amino-acid chain; its full sequence is Putative ALA-interacting subunit 4 (336 aa).

The helical transmembrane segment at 36-56 (VILTFLVSGVVFIPLGVICLF) threads the bilayer. Asn-94 carries N-linked (GlcNAc...) asparagine glycosylation. Residues 127-142 (RQDGQLRSPKDEHETK) are compositionally biased toward basic and acidic residues. A disordered region spans residues 127-148 (RQDGQLRSPKDEHETKSCAPED). N-linked (GlcNAc...) asparagine glycosylation is present at Asn-167. The chain crosses the membrane as a helical span at residues 290–310 (FLGIAYLTVGSICLFLAVSFS). A glycan (N-linked (GlcNAc...) asparagine) is linked at Asn-329.

It belongs to the CDC50/LEM3 family. As to expression, expressed in flowers. May be restricted to pollen grains.

It localises to the membrane. The polypeptide is Putative ALA-interacting subunit 4 (ALIS4) (Arabidopsis thaliana (Mouse-ear cress)).